Here is a 230-residue protein sequence, read N- to C-terminus: Enolase-phosphatase E1 (230 aa).

Belongs to the HAD-like hydrolase superfamily. MasA/MtnC family. As to quaternary structure, monomer. Requires Mg(2+) as cofactor.

It carries out the reaction 5-methylsulfanyl-2,3-dioxopentyl phosphate + H2O = 1,2-dihydroxy-5-(methylsulfanyl)pent-1-en-3-one + phosphate. It participates in amino-acid biosynthesis; L-methionine biosynthesis via salvage pathway; L-methionine from S-methyl-5-thio-alpha-D-ribose 1-phosphate: step 3/6. The protein operates within amino-acid biosynthesis; L-methionine biosynthesis via salvage pathway; L-methionine from S-methyl-5-thio-alpha-D-ribose 1-phosphate: step 4/6. Bifunctional enzyme that catalyzes the enolization of 2,3-diketo-5-methylthiopentyl-1-phosphate (DK-MTP-1-P) into the intermediate 2-hydroxy-3-keto-5-methylthiopentenyl-1-phosphate (HK-MTPenyl-1-P), which is then dephosphorylated to form the acireductone 1,2-dihydroxy-3-keto-5-methylthiopentene (DHK-MTPene). The polypeptide is Enolase-phosphatase E1 (Marinobacter nauticus (strain ATCC 700491 / DSM 11845 / VT8) (Marinobacter aquaeolei)).